The primary structure comprises 596 residues: Nucleotidyltransferase lcsQ (596 aa).

A mitochondrion-targeting transit peptide spans 1 to 22 (MLLRLSPSRMALKRKLDSFLRN). The interval 475 to 504 (IVAHPGKPSQPADVPETPLSSGASKSKNLD) is disordered.

It belongs to the tRNA nucleotidyltransferase/poly(A) polymerase family.

It is found in the mitochondrion. Its function is as follows. Nucleotidyltransferase; part of the gene cluster that mediates the biosynthesis of the lipopeptide antibiotics leucinostatins that show extensive biological activities, including antimalarial, antiviral, antibacterial, antifungal, and antitumor activities, as well as phytotoxic. The function of lcsQ within the leucinostatins biosynthesis has not been identified yet. The protein is Nucleotidyltransferase lcsQ of Purpureocillium lilacinum (Paecilomyces lilacinus).